A 227-amino-acid chain; its full sequence is Probable chorismate pyruvate-lyase (227 aa).

The substrate site is built by arginine 75, leucine 113, and glutamate 173. The tract at residues serine 192–arginine 227 is disordered. The segment covering arginine 200 to alanine 212 has biased composition (basic and acidic residues).

The protein belongs to the UbiC family.

It is found in the cytoplasm. The catalysed reaction is chorismate = 4-hydroxybenzoate + pyruvate. It participates in cofactor biosynthesis; ubiquinone biosynthesis. In terms of biological role, removes the pyruvyl group from chorismate, with concomitant aromatization of the ring, to provide 4-hydroxybenzoate (4HB) for the ubiquinone pathway. This Paraburkholderia xenovorans (strain LB400) protein is Probable chorismate pyruvate-lyase.